The chain runs to 792 residues: LPS-assembly protein LptD (792 aa).

A signal peptide spans methionine 1–alanine 22.

It belongs to the LptD family. As to quaternary structure, component of the lipopolysaccharide transport and assembly complex. Interacts with LptE and LptA.

Its subcellular location is the cell outer membrane. In terms of biological role, together with LptE, is involved in the assembly of lipopolysaccharide (LPS) at the surface of the outer membrane. This Xylella fastidiosa (strain Temecula1 / ATCC 700964) protein is LPS-assembly protein LptD.